The chain runs to 218 residues: Pyrrolidone-carboxylate peptidase 2 (218 aa).

Residues Glu83, Cys146, and His170 contribute to the active site.

Belongs to the peptidase C15 family. In terms of assembly, homotetramer.

The protein resides in the cytoplasm. It catalyses the reaction Release of an N-terminal pyroglutamyl group from a polypeptide, the second amino acid generally not being Pro.. In terms of biological role, removes 5-oxoproline from various penultimate amino acid residues except L-proline. The protein is Pyrrolidone-carboxylate peptidase 2 of Photorhabdus laumondii subsp. laumondii (strain DSM 15139 / CIP 105565 / TT01) (Photorhabdus luminescens subsp. laumondii).